We begin with the raw amino-acid sequence, 96 residues long: Uteroglobin (96 aa).

Positions 1–21 (MKIAITITVVMLSICCSSASS) are cleaved as a signal peptide.

It belongs to the secretoglobin family. In terms of assembly, antiparallel homodimer; disulfide-linked. Interaction with LMBR1L is controversial. In terms of tissue distribution, club cells (nonciliated cells of the surface epithelium of the pulmonary airways).

It is found in the secreted. Its function is as follows. Binds phosphatidylcholine, phosphatidylinositol, polychlorinated biphenyls (PCB) and weakly progesterone, potent inhibitor of phospholipase A2. This chain is Uteroglobin (Scgb1a1), found in Mus musculus (Mouse).